The chain runs to 883 residues: Phosphoenolpyruvate carboxylase (883 aa).

Active-site residues include histidine 138 and lysine 546.

The protein belongs to the PEPCase type 1 family. Mg(2+) is required as a cofactor.

It catalyses the reaction oxaloacetate + phosphate = phosphoenolpyruvate + hydrogencarbonate. Functionally, forms oxaloacetate, a four-carbon dicarboxylic acid source for the tricarboxylic acid cycle. In Enterobacter sp. (strain 638), this protein is Phosphoenolpyruvate carboxylase.